The chain runs to 806 residues: DNA topoisomerase 4 subunit A (806 aa).

One can recognise a Topo IIA-type catalytic domain in the interval 33 to 499 (LPDARDGLKP…EEIKINLEVM (467 aa)). Residue Y121 is the O-(5'-phospho-DNA)-tyrosine intermediate of the active site.

This sequence belongs to the type II topoisomerase GyrA/ParC subunit family. ParC type 2 subfamily. In terms of assembly, heterotetramer composed of ParC and ParE.

It is found in the cell membrane. It localises to the cytoplasm. It carries out the reaction ATP-dependent breakage, passage and rejoining of double-stranded DNA.. Functionally, topoisomerase IV is essential for chromosome segregation. It relaxes supercoiled DNA. Performs the decatenation events required during the replication of a circular DNA molecule. The protein is DNA topoisomerase 4 subunit A of Bacillus subtilis (strain 168).